We begin with the raw amino-acid sequence, 409 residues long: Phosphoserine phosphatase SerB2 (409 aa).

2 consecutive ACT domains span residues L8–D86 and G102–L174. The active-site Nucleophile is D185. Mg(2+) contacts are provided by D185 and D187. The Proton donor role is filled by D187. Substrate contacts are provided by residues E194, R230, S273 to G274, and K318. D341 is a binding site for Mg(2+). Residue N344 coordinates substrate.

Belongs to the HAD-like hydrolase superfamily. SerB family. Homodimer. The dimeric population shifts to a tetramer in the presence of L-serine, which inactivates the enzyme. It depends on Mg(2+) as a cofactor. Mn(2+) serves as cofactor.

Its subcellular location is the secreted. The protein resides in the host cytoplasm. It localises to the host cytosol. It catalyses the reaction O-phospho-L-serine + H2O = L-serine + phosphate. The enzyme catalyses O-phospho-D-serine + H2O = D-serine + phosphate. The catalysed reaction is O-phospho-L-seryl-[protein] + H2O = L-seryl-[protein] + phosphate. It carries out the reaction O-phospho-L-threonyl-[protein] + H2O = L-threonyl-[protein] + phosphate. It participates in amino-acid biosynthesis; L-serine biosynthesis; L-serine from 3-phospho-D-glycerate: step 3/3. With respect to regulation, clofazimine, a drug being evaluated for XDR and MDR tuberculosis, inhibits SerB2 phosphatase activity and reverses the various functional effects described above and interactions with host proteins. Is inhibited by known PSP inhibitors such as chlorpromazine, DL-AP3 and sodium orthovanadate, but not by okadaic acid. By binding to the ACT domains, amino-acids have various effects on enzyme activity: L-serine and L-glycine act as inhibitors, whereas L-lysine, L-tyrosine and L-phenylalanine are activators. High throughput screen has been performed to identify specific PSP inhibitors with activity against intracellular bacteria; the two best hits identified in this screen, clorobiocin and rosaniline, are bactericidal and kill bacteria in infected macrophages in a dose-dependent manner. Functionally, catalyzes the dephosphorylation of O-phospho-L-serine into L-serine, a step in the L-serine biosynthetic pathway. Exhibits high specificity for L-phosphoserine compared to substrates like L-phosphothreonine (5% relative activity) and L-phosphotyrosine (1.7% relative activity). Its function is as follows. In the host, induces significant cytoskeleton rearrangements through cofilin dephosphorylation and its subsequent activation, and affects the expression of genes that regulate actin dynamics. It specifically interacts with HSP90, HSP70 and HSP27 that block apoptotic pathways but not with other HSPs. Also interacts with GAPDH. It actively dephosphorylates MAP kinase p38 and NF-kappa B p65 (specifically at Ser-536) that play crucial roles in inflammatory and immune responses. This in turn leads to down-regulation of Interleukin 8, a chemotactic and inflammatory cytokine. Thus might help the pathogen to evade the host's immune response. Exogenous addition of purified SerB2 protein to human THP-1 cells (that can be differentiated into macrophage-like cells) induces microtubule rearrangements; the phosphatase activity is co-related to the elicited rearrangements, while addition of the ACT-domains alone elicits no rearrangements. The protein is Phosphoserine phosphatase SerB2 of Mycobacterium tuberculosis (strain ATCC 25618 / H37Rv).